A 238-amino-acid chain; its full sequence is MAVEGGMKCVKFLLYVLLLAFCACAVGLIAIGVAVQVVLKQAITHETTAGSLLPVVIIAVGAFLFLVAFVGCCGACKENYCLMITFAIFLSLIMLVEVAVAIAGYVFRDQVKSEFNKSFQQQMQNYLKDNKTATILDKLQKENNCCGASNYTDWENIPGMAKDRVPDSCCINITVGCGNDFKESTIHTQGCVETIAIWLRKNILLVAAAALGIAFVEVLGIIFSCCLVKSIRSGYEVM.

Over 1–11 (MAVEGGMKCVK) the chain is Cytoplasmic. The chain crosses the membrane as a helical span at residues 12-32 (FLLYVLLLAFCACAVGLIAIG). The Extracellular portion of the chain corresponds to 33–51 (VAVQVVLKQAITHETTAGS). The chain crosses the membrane as a helical span at residues 52-72 (LLPVVIIAVGAFLFLVAFVGC). Over 73 to 81 (CGACKENYC) the chain is Cytoplasmic. The chain crosses the membrane as a helical span at residues 82–102 (LMITFAIFLSLIMLVEVAVAI). Topologically, residues 103-203 (AGYVFRDQVK…TIAIWLRKNI (101 aa)) are extracellular. Residues Asn-116, Asn-130, Asn-150, and Asn-172 are each glycosylated (N-linked (GlcNAc...) asparagine). Residues 204 to 224 (LLVAAAALGIAFVEVLGIIFS) form a helical membrane-spanning segment. Residues 225–238 (CCLVKSIRSGYEVM) lie on the Cytoplasmic side of the membrane. The Lysosomal targeting motif signature appears at 234–238 (GYEVM).

It belongs to the tetraspanin (TM4SF) family. In terms of assembly, interacts with TIMP1 and ITGB1 and recruits TIMP1 to ITGB1. Interacts with CD9. Identified in a complex with CD9 and ITGB3. Interacts with PMEL. Interacts with KDR/VEGFR2; identified in a complex with ITGB1 and KDR/VEGFR2 and is required to recruit KDR to ITGB1 complexes. Interacts with SYT7. In terms of processing, palmitoylated at a low, basal level in unstimulated platelets. The level of palmitoylation increases when platelets are activated by thrombin (in vitro). Ubiquitous. Strongly expressed in kidney. Detected in spleen, bone marrow, peripheral blood mononuclear cells and macrophages.

Its subcellular location is the cell membrane. It is found in the lysosome membrane. The protein resides in the late endosome membrane. The protein localises to the endosome. It localises to the multivesicular body. Its subcellular location is the melanosome. It is found in the secreted. The protein resides in the extracellular exosome. The protein localises to the cell surface. Its function is as follows. Functions as a cell surface receptor for TIMP1 and plays a role in the activation of cellular signaling cascades. Plays a role in the activation of ITGB1 and integrin signaling, leading to the activation of AKT, FAK/PTK2 and MAP kinases. Promotes cell survival, reorganization of the actin cytoskeleton, cell adhesion, spreading and migration, via its role in the activation of AKT and FAK/PTK2. Plays a role in VEGFA signaling via its role in regulating the internalization of KDR/VEGFR2. Plays a role in intracellular vesicular transport processes, and is required for normal trafficking of the PMEL luminal domain that is essential for the development and maturation of melanocytes. Plays a role in the adhesion of leukocytes onto endothelial cells via its role in the regulation of SELP trafficking. May play a role in mast cell degranulation in response to Ms4a2/FceRI stimulation, but not in mast cell degranulation in response to other stimuli. This Mus musculus (Mouse) protein is CD63 antigen (Cd63).